A 324-amino-acid chain; its full sequence is Lipid droplet-associated hydrolase (324 aa).

Serine 136 serves as the catalytic Nucleophile. Residues aspartate 270 and histidine 299 each act as charge relay system in the active site.

The protein belongs to the AB hydrolase superfamily. LDAH family.

The protein resides in the lipid droplet. It localises to the endoplasmic reticulum. It catalyses the reaction a cholesterol ester + H2O = cholesterol + a fatty acid + H(+). Its function is as follows. Probable serine lipid hydrolase associated with lipid droplets. Has low cholesterol esterase activity. Appears to lack triglyceride lipase activity. Involved in cholesterol and triglyceride homeostasis; stimulates cellular triglyceride accumulation and cellular cholesterol release. In Gallus gallus (Chicken), this protein is Lipid droplet-associated hydrolase.